We begin with the raw amino-acid sequence, 647 residues long: UvrABC system protein C (647 aa).

Residues 16–95 (VEPGVYRFRD…IKEFDPRFNI (80 aa)) form the GIY-YIG domain. Residues 208-243 (DRYARDLERKMSAAAEQLDFERAARLRDDLFALKRA) enclose the UVR domain.

Belongs to the UvrC family. In terms of assembly, interacts with UvrB in an incision complex.

The protein localises to the cytoplasm. In terms of biological role, the UvrABC repair system catalyzes the recognition and processing of DNA lesions. UvrC both incises the 5' and 3' sides of the lesion. The N-terminal half is responsible for the 3' incision and the C-terminal half is responsible for the 5' incision. The polypeptide is UvrABC system protein C (Mycobacterium leprae (strain Br4923)).